Reading from the N-terminus, the 357-residue chain is MKKYLLLALLPFLYACSNSPNQGINYDEAFAKDTQGLDILTGQFSHNIDRIWGVNELLVASRKDYVKYTDSFYTRSHVSFDEGNIVIETQQDPNRLHNAIVHTLLMGADAKGIDLFASGDVPISSRPFLLGQVVDHQGQQIANQVIASNFATYLIQNKLQTRRLQNGHTVQFVSVPMIANHVEVRARKYLPLIRKAAQRYGIDESLILGIMQTESSFNPYAISYANAIGLMQVVPHTAGRDVFTMKGKGGQPSTRYLYDPTNNIDAGVSYLWILQNQYLDGITNPTSKRFAMISAYNSGAGAVLRVFDNDKDMAIYKINQMYPEQVYRILTTAHPSSQARNYLLKVDKAQKKFRVRR.

Residues 1–15 (MKKYLLLALLPFLYA) form the signal peptide. A lipid anchor (N-palmitoyl cysteine) is attached at Cys-16. Cys-16 carries the S-diacylglycerol cysteine lipid modification.

It belongs to the transglycosylase Slt family.

It localises to the cell outer membrane. It carries out the reaction Exolytic cleavage of the (1-&gt;4)-beta-glycosidic linkage between N-acetylmuramic acid (MurNAc) and N-acetylglucosamine (GlcNAc) residues in peptidoglycan, from either the reducing or the non-reducing ends of the peptidoglycan chains, with concomitant formation of a 1,6-anhydrobond in the MurNAc residue.. Its function is as follows. Murein-degrading enzyme. May play a role in recycling of muropeptides during cell elongation and/or cell division. The sequence is that of Membrane-bound lytic murein transglycosylase C from Haemophilus influenzae (strain PittEE).